The sequence spans 239 residues: Purine nucleoside phosphorylase DeoD-type (239 aa).

Position 5 (His5) interacts with a purine D-ribonucleoside. Phosphate contacts are provided by residues Gly21, Arg25, Arg44, and 88 to 91 (RVGS). Residues 180–182 (EME) and 204–205 (SD) each bind a purine D-ribonucleoside. Asp205 (proton donor) is an active-site residue.

This sequence belongs to the PNP/UDP phosphorylase family. Homohexamer; trimer of homodimers.

It carries out the reaction a purine D-ribonucleoside + phosphate = a purine nucleobase + alpha-D-ribose 1-phosphate. The catalysed reaction is a purine 2'-deoxy-D-ribonucleoside + phosphate = a purine nucleobase + 2-deoxy-alpha-D-ribose 1-phosphate. Its function is as follows. Catalyzes the reversible phosphorolytic breakdown of the N-glycosidic bond in the beta-(deoxy)ribonucleoside molecules, with the formation of the corresponding free purine bases and pentose-1-phosphate. This is Purine nucleoside phosphorylase DeoD-type from Pectobacterium atrosepticum (strain SCRI 1043 / ATCC BAA-672) (Erwinia carotovora subsp. atroseptica).